The sequence spans 305 residues: UDP-3-O-acyl-N-acetylglucosamine deacetylase (305 aa).

His78, His237, and Asp241 together coordinate Zn(2+). His264 functions as the Proton donor in the catalytic mechanism.

The protein belongs to the LpxC family. Zn(2+) serves as cofactor.

The enzyme catalyses a UDP-3-O-[(3R)-3-hydroxyacyl]-N-acetyl-alpha-D-glucosamine + H2O = a UDP-3-O-[(3R)-3-hydroxyacyl]-alpha-D-glucosamine + acetate. Its pathway is glycolipid biosynthesis; lipid IV(A) biosynthesis; lipid IV(A) from (3R)-3-hydroxytetradecanoyl-[acyl-carrier-protein] and UDP-N-acetyl-alpha-D-glucosamine: step 2/6. Catalyzes the hydrolysis of UDP-3-O-myristoyl-N-acetylglucosamine to form UDP-3-O-myristoylglucosamine and acetate, the committed step in lipid A biosynthesis. The protein is UDP-3-O-acyl-N-acetylglucosamine deacetylase of Burkholderia ambifaria (strain MC40-6).